A 385-amino-acid chain; its full sequence is Trans-enoyl reductase tasC (385 aa).

49–52 contacts NADP(+); that stretch reads VDTK. 136-143 provides a ligand contact to substrate; sequence NSWYTVAW. NADP(+) contacts are provided by residues 196 to 199, 219 to 222, and 284 to 285; these read SSST, SARN, and LD. A substrate-binding site is contributed by 305 to 309; the sequence is GPELM. 374–375 contacts NADP(+); it reads VS.

This sequence belongs to the zinc-containing alcohol dehydrogenase family. Monomer.

The catalysed reaction is (2S,4S)-4-hydroxy-4-methylglutamate + 8 malonyl-CoA + 3 S-adenosyl-L-methionine + ATP + 8 NADPH + 11 H(+) = (2S)-3-[(2S)-3,5-dioxo-4-[(2E,4R,6R,8E,10E,12E)-4,6,12-trimethyltetradeca-2,8,10,12-tetraenoyl]pyrrolidin-2-yl]-2-hydroxy-2-methylpropanoate + AMP + 3 S-adenosyl-L-homocysteine + 8 CO2 + diphosphate + 8 NADP(+) + 8 CoA + 6 H2O. The enzyme catalyses (2S,4R)-4-hydroxy-4-methylglutamate + 8 malonyl-CoA + 3 S-adenosyl-L-methionine + ATP + 8 NADPH + 11 H(+) = (2R)-3-[(2S)-3,5-dioxo-4-[(2E,4R,6R,8E,10E,12E)-4,6,12-trimethyltetradeca-2,8,10,12-tetraenoyl]pyrrolidin-2-yl]-2-hydroxy-2-methylpropanoate + AMP + 3 S-adenosyl-L-homocysteine + 8 CO2 + diphosphate + 8 NADP(+) + 8 CoA + 6 H2O. It functions in the pathway secondary metabolite biosynthesis. In terms of biological role, trans-enoyl reductase; part of the gene cluster that mediates the biosynthesis of the tetramic acids Sch210971 and Sch210972, potential anti-HIV fungal natural product that contain a decalin core. The PKS module of tasS together with the enoylreductase tasC catalyze the formation of the polyketide unit which is then conjugated to 4-hydroxyl-4-methyl glutamate (HMG) by the condensation domain of the tasS NRPS module. One unique structural feature of Sch210971 and Sch210972 is the tetramic acid motif proposed to be derived from the non-proteinogenic amino acid HMG, by a Dieckmann-type condensation catalyzed by the reductase domain of tasS. The aldolase tasA catalyzes the aldol condensation of 2 molecules of pyruvic acid to yield the intermediate 4-hydroxyl-4-methyl-2-oxoglutarate (HMOG), which can then be stereoselectively transaminated, may be by tasG, to form HMG. The Diels-Alderase tas3 then uses the Dieckmann product of tasS as substrate and catalyzes the Diels-Alder cycloaddition to form the decalin ring of Sch210971 and Sch210972. The chain is Trans-enoyl reductase tasC from Hapsidospora irregularis.